Consider the following 490-residue polypeptide: tRNA-guanine(15) transglycosylase (490 aa).

Asp92 serves as the catalytic Nucleophile. Residues Asp127 and Ala195 each coordinate substrate. Residues Cys278, Cys280, and Cys283 each coordinate Zn(2+).

The protein belongs to the archaeosine tRNA-ribosyltransferase family. Requires Zn(2+) as cofactor.

The enzyme catalyses guanosine(15) in tRNA + 7-cyano-7-deazaguanine = 7-cyano-7-carbaguanosine(15) in tRNA + guanine. It functions in the pathway tRNA modification; archaeosine-tRNA biosynthesis. In terms of biological role, exchanges the guanine residue with 7-cyano-7-deazaguanine (preQ0) at position 15 in the dihydrouridine loop (D-loop) of archaeal tRNAs. The sequence is that of tRNA-guanine(15) transglycosylase from Haloarcula marismortui (strain ATCC 43049 / DSM 3752 / JCM 8966 / VKM B-1809) (Halobacterium marismortui).